The chain runs to 462 residues: Aquaporin-1 (462 aa).

Residues 1–11 (MTMRSPLTNDH) are compositionally biased toward polar residues. The disordered stretch occupies residues 1-24 (MTMRSPLTNDHPQPLRASPLSEHD). Topologically, residues 1-146 (MTMRSPLTND…KWMNSDWKNH (146 aa)) are cytoplasmic. The helical transmembrane segment at 147-167 (IVAVIGELIGTSLFLFFGYAG) threads the bilayer. At 168–182 (IEVAKLQGREPPDLE) the chain is on the extracellular side. A helical transmembrane segment spans residues 183–203 (VLFYISATFGASLMVTAWIFF). At 204–229 (RISGGLFNPAVTLALAILKAVSPIRA) the chain is on the cytoplasmic side. The short motif at 211 to 213 (NPA) is the NPA 1 element. The chain crosses the membrane as a helical span at residues 230 to 250 (FLLVITQLGASCLAAILVQEI). Residues 251–269 (FPKQLDVATTLGSGTSMGQ) are Extracellular-facing. The helical transmembrane segment at 270–290 (GFVIEAITTAALIFTIIMLAV) threads the bilayer. At 291–296 (EKHKAT) the chain is on the cytoplasmic side. The helical transmembrane segment at 297–317 (FVAPIGIGLALFVAHMVAVPF) threads the bilayer. The Extracellular segment spans residues 318 to 341 (TGASLNPARSFGPSAIVWNFPREH). The short motif at 323-325 (NPA) is the NPA 2 element. A helical transmembrane segment spans residues 342–362 (WIYWVGPILGAGLAVLFFRLI). The Cytoplasmic segment spans residues 363-462 (KLMEYEMANP…WRRQQYRNVV (100 aa)). The interval 407–433 (GKSWYRDDSSSGSMRRKESVNSFTGGR) is disordered. Residues 410–425 (WYRDDSSSGSMRRKES) show a composition bias toward basic and acidic residues.

Belongs to the MIP/aquaporin (TC 1.A.8) family.

The protein resides in the membrane. It carries out the reaction H2O(in) = H2O(out). Water channel required to facilitate the transport of water across membranes. Involved in conidiation. This chain is Aquaporin-1, found in Botryotinia fuckeliana (strain B05.10) (Noble rot fungus).